The following is a 314-amino-acid chain: Zinc transporter ZIP3 (314 aa).

Residues 1–3 (MVK) are Extracellular-facing. The helical transmembrane segment at 4–24 (LLVAKILCMVGMFFFMLLGSL) threads the bilayer. The Cytoplasmic segment spans residues 25–42 (LPVKIIEMDFEKAHRSKK). Residues 43–63 (ILSLCNTFGGGVFLATCFNAL) form a helical membrane-spanning segment. Topologically, residues 64-85 (LPAVREKLKEVLTLAHISTDYP) are extracellular. A helical membrane pass occupies residues 86–106 (LAETIMLLGFFMTVFLEQLVL). At 107–169 (TFRKERPAFI…QELSRSSPLR (63 aa)) the chain is on the cytoplasmic side. Residues S125 and S129 each carry the phosphoserine modification. Residues 170 to 190 (LLSLVFALSAHSVFEGLALGL) traverse the membrane as a helical segment. The Extracellular portion of the chain corresponds to 191 to 196 (QEEGEK). The helical transmembrane segment at 197-217 (VVSLFVGVAIHETLVAVALGI) threads the bilayer. Over 218-229 (NMARSAMALRDA) the chain is Cytoplasmic. The helical transmembrane segment at 230-250 (AKLAVTVSAMIPLGISLGLGI) threads the bilayer. Topologically, residues 251 to 262 (DSAQGMPSSVAS) are extracellular. A helical membrane pass occupies residues 263-283 (VLLQGLAGGTFLFVTFFEILA). At 284–292 (KELEEKSDR) the chain is on the cytoplasmic side. Residues 293–313 (LLKVLFLVLGYTVLAGMVFIK) form a helical membrane-spanning segment. Position 314 (W314) is a topological domain, extracellular.

This sequence belongs to the ZIP transporter (TC 2.A.5) family.

It localises to the cell membrane. Its subcellular location is the apical cell membrane. It catalyses the reaction Zn(2+)(in) = Zn(2+)(out). Its function is as follows. Transporter for the divalent cation Zn(2+). Mediates the influx of Zn(2+) into cells from extracellular space. Controls Zn(2+) accumulation into dentate gyrus granule cells in the hippocampus. Mediates Zn(2+) reuptake from the secreted milk within the alveolar lumen. This is Zinc transporter ZIP3 (SLC39A3) from Bos taurus (Bovine).